A 589-amino-acid chain; its full sequence is Polypeptide N-acetylgalactosaminyltransferase 4 (589 aa).

Over 1–11 (MLPRMLKMKTV) the chain is Cytoplasmic. A helical; Signal-anchor for type II membrane protein transmembrane segment spans residues 12 to 31 (GTVLAVIWLFGLAFIYVQST). At 32-589 (SSSLRPPGRH…WIFEKLDTYE (558 aa)) the chain is on the lumenal side. Residues 33–73 (SSLRPPGRHPPPLPQLDPLIPQNPPQNDEIRPKKSAPPIPT) form a disordered region. Disulfide bonds link C140-C369, C360-C438, C471-C488, C514-C531, and C553-C571. Residues 150–255 (MQPTTVIITY…QKWLEPLLAR (106 aa)) form a catalytic subdomain A region. Substrate-binding residues include D191 and R216. D239 lines the Mn(2+) pocket. S240 is a binding site for substrate. Mn(2+) is bound at residue H241. Residues 315-377 (PIRSPTMAGG…PCSRVGHVFR (63 aa)) are catalytic subdomain B. W346 is a substrate binding site. Residue H374 coordinates Mn(2+). The substrate site is built by R377, H380, and Y382. Residues 458–589 (TPGKSFQMKI…WIFEKLDTYE (132 aa)) form the Ricin B-type lectin domain. N523 carries an N-linked (GlcNAc...) asparagine glycan.

Belongs to the glycosyltransferase 2 family. GalNAc-T subfamily. The cofactor is Mn(2+).

It is found in the golgi apparatus membrane. The catalysed reaction is L-seryl-[protein] + UDP-N-acetyl-alpha-D-galactosamine = a 3-O-[N-acetyl-alpha-D-galactosaminyl]-L-seryl-[protein] + UDP + H(+). It catalyses the reaction L-threonyl-[protein] + UDP-N-acetyl-alpha-D-galactosamine = a 3-O-[N-acetyl-alpha-D-galactosaminyl]-L-threonyl-[protein] + UDP + H(+). It functions in the pathway protein modification; protein glycosylation. Functionally, catalyzes the initial reaction in O-linked oligosaccharide biosynthesis, the transfer of an N-acetyl-D-galactosamine residue to a serine or threonine residue on the protein receptor. This chain is Polypeptide N-acetylgalactosaminyltransferase 4 (gly-4), found in Caenorhabditis elegans.